Here is a 239-residue protein sequence, read N- to C-terminus: Small ribosomal subunit protein uS2 (239 aa).

It belongs to the universal ribosomal protein uS2 family.

The protein is Small ribosomal subunit protein uS2 of Prochlorococcus marinus (strain MIT 9313).